A 414-amino-acid chain; its full sequence is Probable solanesyl-diphosphate synthase 3, chloroplastic (414 aa).

The segment covering 1 to 23 (MAAPSSLASSSHLSRRATAAASP) has biased composition (low complexity). The segment at 1–36 (MAAPSSLASSSHLSRRATAAASPSIPPPSPPPPPQR) is disordered. The transit peptide at 1-72 (MAAPSSLASS…KPGVAAVDVP (72 aa)) directs the protein to the chloroplast. The span at 24–35 (SIPPPSPPPPPQ) shows a compositional bias: pro residues. Residues K134, R137, and H172 each coordinate isopentenyl diphosphate. Mg(2+)-binding residues include D179 and D183. R188 is an an all-trans-polyprenyl diphosphate binding site. Residue R189 participates in isopentenyl diphosphate binding. An all-trans-polyprenyl diphosphate is bound by residues K265, T266, Q303, and K320.

Belongs to the FPP/GGPP synthase family. As to quaternary structure, homodimer. Requires Mg(2+) as cofactor.

It localises to the plastid. It is found in the chloroplast. It carries out the reaction 7 isopentenyl diphosphate + (2E)-geranyl diphosphate = all-trans-nonaprenyl diphosphate + 7 diphosphate. Its function is as follows. Involved in providing solanesyl diphosphate for plastoquinone-9 (PQ-9) formation. The protein is Probable solanesyl-diphosphate synthase 3, chloroplastic of Oryza sativa subsp. japonica (Rice).